We begin with the raw amino-acid sequence, 542 residues long: Dihydropyrimidinase (542 aa).

Zn(2+)-binding residues include histidine 62, histidine 64, and lysine 167. N6-carboxylysine is present on lysine 167. A substrate-binding site is contributed by tyrosine 172. Zn(2+) contacts are provided by histidine 199 and histidine 255. Residue serine 331 participates in substrate binding. Zn(2+) is bound at residue aspartate 358. Substrate is bound at residue asparagine 392.

Belongs to the metallo-dependent hydrolases superfamily. Hydantoinase/dihydropyrimidinase family. Homotetramer. Zn(2+) is required as a cofactor. Post-translationally, carboxylation allows a single lysine to coordinate two zinc ions.

It catalyses the reaction 5,6-dihydrouracil + H2O = 3-(carbamoylamino)propanoate + H(+). Catalyzes the second step of the reductive pyrimidine degradation, the reversible hydrolytic ring opening of dihydropyrimidines. Can catalyze the ring opening of 5,6-dihydrouracil to N-carbamyl-alanine and of 5,6-dihydrothymine to N-carbamyl-amino isobutyrate. The protein is Dihydropyrimidinase (PYD2) of Lachancea kluyveri (strain ATCC 58438 / CBS 3082 / BCRC 21498 / NBRC 1685 / JCM 7257 / NCYC 543 / NRRL Y-12651) (Yeast).